Reading from the N-terminus, the 277-residue chain is Putative envelope-preserving system protein Rv2742c (277 aa).

Residues 31–54 (RDENRQRHAQVDVQRRRDQPERGQ) show a composition bias toward basic and acidic residues. Disordered regions lie at residues 31–70 (RDEN…PDGR), 113–133 (QGSP…RLGR), and 180–210 (RQGS…HTAD). The span at 116-133 (PRRRERRRGQTAHQRLGR) shows a compositional bias: basic residues.

As to quaternary structure, interacts with Rv2743c.

Its function is as follows. Involved in preservation of envelope integrity and tolerance to surface stress. Reverses the inhibitory effect of PspA on ClgR activity. Facilitates intracellular growth of M.tuberculosis. This is Putative envelope-preserving system protein Rv2742c from Mycobacterium tuberculosis (strain ATCC 25618 / H37Rv).